The following is a 230-amino-acid chain: Lipoprotein-releasing system ATP-binding protein LolD (230 aa).

An ABC transporter domain is found at 6-230; that stretch reads LQVQAVSKSY…GYLQVPESAQ (225 aa). Residue 42-49 participates in ATP binding; it reads GTSGSGKS.

The protein belongs to the ABC transporter superfamily. Lipoprotein translocase (TC 3.A.1.125) family. In terms of assembly, the complex is composed of two ATP-binding proteins (LolD) and two transmembrane proteins (LolC and LolE).

The protein resides in the cell inner membrane. Its function is as follows. Part of the ABC transporter complex LolCDE involved in the translocation of mature outer membrane-directed lipoproteins, from the inner membrane to the periplasmic chaperone, LolA. Responsible for the formation of the LolA-lipoprotein complex in an ATP-dependent manner. The chain is Lipoprotein-releasing system ATP-binding protein LolD from Shewanella oneidensis (strain ATCC 700550 / JCM 31522 / CIP 106686 / LMG 19005 / NCIMB 14063 / MR-1).